Consider the following 37-residue polypeptide: Hemextin A (37 aa).

Heterotetramer composed of two A and two B chains; non-covalently linked. Does not exist as a complex in the crude venom. May contain several disulfide bonds. Expressed by the venom gland.

The protein resides in the secreted. Its function is as follows. Hemextin A (monomer): exhibits mild anticoagulant activity. It specifically inhibits the activation of FX (F10) by the TF-FVIIa complex (extrinsic tenase complex (ETC)) by non-competitively inhibiting the enzymatic activity of FVIIa. In terms of biological role, hemextin AB complex: specifically inhibits the activation of FX (F10) by the TF-FVIIa complex (extrinsic tenase complex (ETC)) (IC(50)= 100 nM, Ki=25 nM) by non-competitively inhibiting the enzymatic activity of FVIIa. The sequence is that of Hemextin A from Hemachatus haemachatus (Rinkhals).